Reading from the N-terminus, the 565-residue chain is Deformed epidermal autoregulatory factor 1 homolog (565 aa).

2 disordered regions span residues 34–62 and 162–190; these read GGEA…ETPR and GLKG…KGGT. Over residues 169–181 the composition is skewed to pro residues; sequence PLTPGPQSPPTPL. Residue T171 is modified to Phosphothreonine. S176 is modified (phosphoserine). T179 is subject to Phosphothreonine. The SAND domain occupies 193 to 273; it reads NWDPSVYDSE…QCLIQDGILN (81 aa). The Nuclear localization signal signature appears at 301–316; sequence KRRKKENELPTTPVKK. Positions 403–478 are interaction with LMO4; that stretch reads IAPFPEAALP…QLKTLFEQAK (76 aa). T432 carries the phosphothreonine modification. S448 is subject to Phosphoserine. Zn(2+) contacts are provided by C504, C507, C515, C518, C524, C528, H536, and C540. Residues 504–540 form an MYND-type zinc finger; the sequence is CVNCGREAMSECTGCHKVNYCSTFCQRKDWKDHQHIC.

In terms of assembly, homodimer. Isoform 1 and isoform 4 may form a heterodimer. Interacts with LMO2 and CLIM2. Interacts with LMO4; LMO4 blocks export from nucleus. May interact with the corepressors NCOR1 and NCRO2. Identified in a complex with the XRCC5 and XRCC6 heterodimer. Interacts (via the SAND domain) with the DNA-PK complex subunit XRCC6; the interaction is direct and may be inhibited by DNA-binding. May be phosphorylated by DNA-PK complex in a DNA independent manner (in vitro). In terms of tissue distribution, expressed in various tissues and cells such as in peripheral mononuclear cells and hormone-secreting pituitary cells. Expression in pancreatic lymph nodes of patients with type 1 diabetes is 20 times higher than in healthy controls. Highly expressed in fetal and adult brain.

It is found in the nucleus. The protein resides in the cytoplasm. Its subcellular location is the secreted. Functionally, transcription factor that binds to sequence with multiple copies of 5'-TTC[CG]G-3' present in its own promoter and that of the HNRPA2B1 gene. Down-regulates transcription of these genes. Binds to the retinoic acid response element (RARE) 5'-AGGGTTCACCGAAAGTTCA-3'. Activates the proenkephalin gene independently of promoter binding, probably through protein-protein interaction. When secreted, behaves as an inhibitor of cell proliferation, by arresting cells in the G0 or G1 phase. Required for neural tube closure and skeletal patterning. Regulates epithelial cell proliferation and side-branching in the mammary gland. Controls the expression of peripheral tissue antigens in pancreatic lymph nodes. Isoform 1 displays greater transcriptional activity than isoform 4. Isoform 4 may inhibit transcriptional activity of isoform 1 by interacting with isoform 1 and retaining it in the cytoplasm. Transcriptional activator of EIF4G3. The protein is Deformed epidermal autoregulatory factor 1 homolog (DEAF1) of Homo sapiens (Human).